A 210-amino-acid chain; its full sequence is Large ribosomal subunit protein uL3 (210 aa).

This sequence belongs to the universal ribosomal protein uL3 family. Part of the 50S ribosomal subunit. Forms a cluster with proteins L14 and L19.

In terms of biological role, one of the primary rRNA binding proteins, it binds directly near the 3'-end of the 23S rRNA, where it nucleates assembly of the 50S subunit. The polypeptide is Large ribosomal subunit protein uL3 (Caldicellulosiruptor bescii (strain ATCC BAA-1888 / DSM 6725 / KCTC 15123 / Z-1320) (Anaerocellum thermophilum)).